Here is a 332-residue protein sequence, read N- to C-terminus: Ribosomal RNA small subunit methyltransferase C (332 aa).

Belongs to the methyltransferase superfamily. RsmC family. In terms of assembly, monomer.

It localises to the cytoplasm. It catalyses the reaction guanosine(1207) in 16S rRNA + S-adenosyl-L-methionine = N(2)-methylguanosine(1207) in 16S rRNA + S-adenosyl-L-homocysteine + H(+). Its function is as follows. Specifically methylates the guanine in position 1207 of 16S rRNA in the 30S particle. This is Ribosomal RNA small subunit methyltransferase C from Pseudomonas syringae pv. tomato (strain ATCC BAA-871 / DC3000).